The following is a 674-amino-acid chain: Probable copper-transporting P-type ATPase B (674 aa).

The disordered stretch occupies residues 1 to 22 (MNHSNQMHHDNHESHNHHSGHA). A compositionally biased stretch (basic and acidic residues) spans 7 to 16 (MHHDNHESHN). The next 6 helical transmembrane spans lie at 32 to 52 (FFVS…MGVN), 57 to 77 (FTFP…FFYG), 95 to 115 (GMMT…LYAF), 127 to 147 (TMDF…GHWI), 284 to 304 (GYLF…WMLI), and 315 to 335 (LVTV…PLVT). The active-site 4-aspartylphosphate intermediate is aspartate 367. Mg(2+)-binding residues include aspartate 565 and aspartate 569. 2 helical membrane passes run 623 to 645 (LWWG…AFIG) and 649 to 671 (SPAI…AFTL).

It belongs to the cation transport ATPase (P-type) (TC 3.A.3) family. Type IB subfamily.

Its subcellular location is the cell membrane. It carries out the reaction Cu(+)(in) + ATP + H2O = Cu(+)(out) + ADP + phosphate + H(+). In terms of biological role, involved in copper transport. This is Probable copper-transporting P-type ATPase B (copB) from Staphylococcus epidermidis (strain ATCC 35984 / DSM 28319 / BCRC 17069 / CCUG 31568 / BM 3577 / RP62A).